The following is a 189-amino-acid chain: Transcription factor FapR (189 aa).

It belongs to the FapR family.

In terms of biological role, transcriptional factor involved in regulation of membrane lipid biosynthesis by repressing genes involved in fatty acid and phospholipid metabolism. This chain is Transcription factor FapR, found in Listeria welshimeri serovar 6b (strain ATCC 35897 / DSM 20650 / CCUG 15529 / CIP 8149 / NCTC 11857 / SLCC 5334 / V8).